Reading from the N-terminus, the 478-residue chain is UDP-N-acetylmuramate--L-alanine ligase (478 aa).

Belongs to the MurCDEF family.

The protein localises to the cytoplasm. It carries out the reaction UDP-N-acetyl-alpha-D-muramate + L-alanine + ATP = UDP-N-acetyl-alpha-D-muramoyl-L-alanine + ADP + phosphate + H(+). Its pathway is cell wall biogenesis; peptidoglycan biosynthesis. Cell wall formation. The protein is UDP-N-acetylmuramate--L-alanine ligase (murC) of Synechococcus elongatus (strain ATCC 33912 / PCC 7942 / FACHB-805) (Anacystis nidulans R2).